A 117-amino-acid polypeptide reads, in one-letter code: MDKKAARIRRATRARRKLQELGATRLVVHRTPRHIYAQVIAPNGSEVLVAASTVEKAIAEQLKSTGNKDAASAIGKAIAERALEKGIKDVSFDRSGFQYHGRVQALADAAREAGLQF.

This sequence belongs to the universal ribosomal protein uL18 family. In terms of assembly, part of the 50S ribosomal subunit; part of the 5S rRNA/L5/L18/L25 subcomplex. Contacts the 5S and 23S rRNAs.

In terms of biological role, this is one of the proteins that bind and probably mediate the attachment of the 5S RNA into the large ribosomal subunit, where it forms part of the central protuberance. The sequence is that of Large ribosomal subunit protein uL18 from Pectobacterium carotovorum subsp. carotovorum (strain PC1).